Reading from the N-terminus, the 61-residue chain is Large ribosomal subunit protein bL32 (61 aa).

The disordered stretch occupies residues 1–20 (MAVQKSKPSRAKRGKRRSHD). Positions 7–19 (KPSRAKRGKRRSH) are enriched in basic residues.

Belongs to the bacterial ribosomal protein bL32 family.

This chain is Large ribosomal subunit protein bL32, found in Buchnera aphidicola subsp. Cinara cedri (strain Cc).